Consider the following 84-residue polypeptide: Delta-conotoxin-like Bt6.4 (84 aa).

Positions M1–A22 are cleaved as a signal peptide. The propeptide occupies D23–R57. Cystine bridges form between C58–C74, C65–C78, and C73–C82.

This sequence belongs to the conotoxin O1 superfamily. Expressed by the venom duct.

The protein resides in the secreted. Functionally, this toxin activates voltage-gated sodium channels. It shifts the voltage-dependence of activation to more hyperpolarized potentials but has only little effect on channel inactivation. It is active on Nav1.3/SCN3A (EC(50)=3.98 nM), Nav1.4/SCN4A (EC(50)=4.99 nM), Nav1.6/SCN8A (EC(50)=1.27 nM) and Nav1.7/SCN9A (EC(50)=2.42 nM) voltage-gated sodium channels. In vivo, it induces nocifensive or pain-like behaviors in mice when injected intraplantarly. The polypeptide is Delta-conotoxin-like Bt6.4 (Conus betulinus (Beech cone)).